The following is a 100-amino-acid chain: Urease subunit gamma (100 aa).

The protein belongs to the urease gamma subunit family. Heterotrimer of UreA (gamma), UreB (beta) and UreC (alpha) subunits. Three heterotrimers associate to form the active enzyme.

It is found in the cytoplasm. It catalyses the reaction urea + 2 H2O + H(+) = hydrogencarbonate + 2 NH4(+). The protein operates within nitrogen metabolism; urea degradation; CO(2) and NH(3) from urea (urease route): step 1/1. This Prochlorococcus marinus (strain NATL2A) protein is Urease subunit gamma.